The primary structure comprises 498 residues: Glutathione hydrolase 6 (498 aa).

At 1–49 (MDATTGAVLYQKLQLWEPGMESEEEEEEEEIAEPLVLSLRRLQNTPGNK) the chain is on the cytoplasmic side. Residues 50–70 (VGGLPGAWTRLLAGLLLLAVS) traverse the membrane as a helical; Signal-anchor for type II membrane protein segment. Topologically, residues 71 to 498 (SSLALRQLQG…PSGCCPFQGY (428 aa)) are extracellular. N-linked (GlcNAc...) asparagine glycosylation is found at Asn162, Asn167, and Asn376.

Belongs to the gamma-glutamyltransferase family. As to quaternary structure, heterodimer composed of the light and heavy chains. The active site is located in the light chain. In terms of processing, cleaved by autocatalysis into a large and a small subunit and the autocatalytic cleavage is essential to the functional activation of the enzyme.

It localises to the membrane. It catalyses the reaction an N-terminal (5-L-glutamyl)-[peptide] + an alpha-amino acid = 5-L-glutamyl amino acid + an N-terminal L-alpha-aminoacyl-[peptide]. The enzyme catalyses glutathione + H2O = L-cysteinylglycine + L-glutamate. The catalysed reaction is an S-substituted glutathione + H2O = an S-substituted L-cysteinylglycine + L-glutamate. It participates in sulfur metabolism; glutathione metabolism. In terms of biological role, hydrolyzes and transfers gamma-glutamyl moieties from glutathione and other gamma-glutamyl compounds to acceptors. In Rattus norvegicus (Rat), this protein is Glutathione hydrolase 6.